Consider the following 352-residue polypeptide: tRNA N6-adenosine threonylcarbamoyltransferase (352 aa).

2 residues coordinate Fe cation: His111 and His115. Substrate-binding positions include 133–137 (LASGG), Asp166, Gly179, and Asn275. Fe cation is bound at residue Asp300.

The protein belongs to the KAE1 / TsaD family. Requires Fe(2+) as cofactor.

It localises to the cytoplasm. It catalyses the reaction L-threonylcarbamoyladenylate + adenosine(37) in tRNA = N(6)-L-threonylcarbamoyladenosine(37) in tRNA + AMP + H(+). In terms of biological role, required for the formation of a threonylcarbamoyl group on adenosine at position 37 (t(6)A37) in tRNAs that read codons beginning with adenine. Is involved in the transfer of the threonylcarbamoyl moiety of threonylcarbamoyl-AMP (TC-AMP) to the N6 group of A37, together with TsaE and TsaB. TsaD likely plays a direct catalytic role in this reaction. This is tRNA N6-adenosine threonylcarbamoyltransferase from Treponema pallidum (strain Nichols).